Consider the following 59-residue polypeptide: Anti-inflammatory peptide amregulin (59 aa).

A signal peptide spans 1–19 (MKLHMLNMLNCLLLTVCDG).

In terms of tissue distribution, salivary glands.

It is found in the secreted. Anti-inflammatory peptide that may facilitate successful blood feeding of ticks and may lead to immunotolerance in its host. Inhibits the secretion of inflammatory factors in rat splenocytes, such as tumor necrosis factor-alpha (TNF), interleukin-1, interleukin-8 (CXCL8) and interferon-gamma (IFNG). In addition, shows strong free radical scavenging and antioxidant activities in vitro. In vivo, inhibits adjuvant-induced paw inflammation in mouse models. The chain is Anti-inflammatory peptide amregulin from Amblyomma variegatum (Tropical bont tick).